The primary structure comprises 459 residues: Ribulose bisphosphate carboxylase large chain (459 aa).

Positions 1–2 (MS) are excised as a propeptide. Pro3 carries the post-translational modification N-acetylproline. At Lys14 the chain carries N6,N6,N6-trimethyllysine. Substrate-binding residues include Xaa123 and Thr173. Lys175 serves as the catalytic Proton acceptor. Lys177 serves as a coordination point for substrate. Residues Lys201, Asp203, and Glu204 each contribute to the Mg(2+) site. Position 201 is an N6-carboxylysine (Lys201). Catalysis depends on His294, which acts as the Proton acceptor. 3 residues coordinate substrate: Arg295, His327, and Ser379.

The protein belongs to the RuBisCO large chain family. Type I subfamily. As to quaternary structure, heterohexadecamer of 8 large chains and 8 small chains; disulfide-linked. The disulfide link is formed within the large subunit homodimers. The cofactor is Mg(2+). In terms of processing, the disulfide bond which can form in the large chain dimeric partners within the hexadecamer appears to be associated with oxidative stress and protein turnover.

It localises to the plastid. The protein localises to the chloroplast. It catalyses the reaction 2 (2R)-3-phosphoglycerate + 2 H(+) = D-ribulose 1,5-bisphosphate + CO2 + H2O. It carries out the reaction D-ribulose 1,5-bisphosphate + O2 = 2-phosphoglycolate + (2R)-3-phosphoglycerate + 2 H(+). Functionally, ruBisCO catalyzes two reactions: the carboxylation of D-ribulose 1,5-bisphosphate, the primary event in carbon dioxide fixation, as well as the oxidative fragmentation of the pentose substrate in the photorespiration process. Both reactions occur simultaneously and in competition at the same active site. This Corynocarpus laevigatus (New Zealand laurel) protein is Ribulose bisphosphate carboxylase large chain.